Consider the following 189-residue polypeptide: Hypoxanthine/guanine phosphoribosyltransferase (189 aa).

It belongs to the purine/pyrimidine phosphoribosyltransferase family. Archaeal HPRT subfamily. Homodimer.

It localises to the cytoplasm. The catalysed reaction is IMP + diphosphate = hypoxanthine + 5-phospho-alpha-D-ribose 1-diphosphate. It carries out the reaction GMP + diphosphate = guanine + 5-phospho-alpha-D-ribose 1-diphosphate. The protein operates within purine metabolism; IMP biosynthesis via salvage pathway; IMP from hypoxanthine: step 1/1. In terms of biological role, catalyzes a salvage reaction resulting in the formation of IMP that is energically less costly than de novo synthesis. This chain is Hypoxanthine/guanine phosphoribosyltransferase, found in Methanothrix soehngenii (strain ATCC 5969 / DSM 3671 / JCM 10134 / NBRC 103675 / OCM 69 / GP-6) (Methanosaeta concilii).